A 59-amino-acid chain; its full sequence is MFTLKKSMLLLLFLGTISLTLCEEERDANEEEENGGEVKEEEKRFIGPLISALASLFKG.

The signal sequence occupies residues 1 to 22 (MFTLKKSMLLLLFLGTISLTLC). Residues 23 to 42 (EEERDANEEEENGGEVKEEE) constitute a propeptide that is removed on maturation.

It belongs to the frog skin active peptide (FSAP) family. Temporin subfamily. As to expression, expressed by the skin glands.

It localises to the secreted. In terms of biological role, antimicrobial peptide. The protein is Temporin-CDYd of Rana dybowskii (Dybovsky's frog).